The following is a 388-amino-acid chain: Processive diacylglycerol beta-glucosyltransferase (388 aa).

The protein belongs to the glycosyltransferase 28 family. UgtP subfamily.

The protein localises to the cell membrane. It carries out the reaction a 1,2-diacyl-3-O-(beta-D-glucopyranosyl)-sn-glycerol + UDP-alpha-D-glucose = a 1,2-diacyl-3-O-(beta-D-Glc-(1-&gt;6)-beta-D-Glc)-sn-glycerol + UDP + H(+). The enzyme catalyses a 1,2-diacyl-3-O-(beta-D-Glc-(1-&gt;6)-beta-D-Glc)-sn-glycerol + UDP-alpha-D-glucose = a 1,2-diacyl-3-O-(beta-D-Glc-(1-&gt;6)-beta-D-Glc-(1-&gt;6)-beta-D-Glc)-sn-glycerol + UDP + H(+). The catalysed reaction is a 1,2-diacyl-sn-glycerol + UDP-alpha-D-glucose = a 1,2-diacyl-3-O-(beta-D-glucopyranosyl)-sn-glycerol + UDP + H(+). It functions in the pathway glycolipid metabolism; diglucosyl-diacylglycerol biosynthesis. Processive glucosyltransferase involved in the biosynthesis of both the bilayer- and non-bilayer-forming membrane glucolipids. Is able to successively transfer up to three glucosyl residues to diacylglycerol (DAG), thereby catalyzing the formation of beta-monoglucosyl-DAG (3-O-(beta-D-glucopyranosyl)-1,2-diacyl-sn-glycerol), beta-diglucosyl-DAG (3-O-(beta-D-glucopyranosyl-beta-(1-&gt;6)-D-glucopyranosyl)-1,2-diacyl-sn-glycerol) and beta-triglucosyl-DAG (3-O-(beta-D-glucopyranosyl-beta-(1-&gt;6)-D-glucopyranosyl-beta-(1-&gt;6)-D-glucopyranosyl)-1,2-diacyl-sn-glycerol). Beta-diglucosyl-DAG is the predominant glycolipid found in Bacillales and is also used as a membrane anchor for lipoteichoic acid (LTA). This chain is Processive diacylglycerol beta-glucosyltransferase, found in Bacillus cereus (strain 03BB102).